The following is a 231-amino-acid chain: Large ribosomal subunit protein uL3 (231 aa).

An N5-methylglutamine modification is found at glutamine 151.

This sequence belongs to the universal ribosomal protein uL3 family. In terms of assembly, part of the 50S ribosomal subunit. Forms a cluster with proteins L14 and L19. In terms of processing, methylated by PrmB.

One of the primary rRNA binding proteins, it binds directly near the 3'-end of the 23S rRNA, where it nucleates assembly of the 50S subunit. In Granulibacter bethesdensis (strain ATCC BAA-1260 / CGDNIH1), this protein is Large ribosomal subunit protein uL3.